Reading from the N-terminus, the 368-residue chain is Lipoyl synthase, chloroplastic (368 aa).

2 disordered regions span residues 1–30 (MQSSLARPLRPPVLAGCGGRRGHGAPRGSV) and 42–61 (PTVGTASRAPAGPYTGRDPE). Positions 94, 99, 105, 131, 135, 138, and 346 each coordinate [4Fe-4S] cluster. In terms of domain architecture, Radical SAM core spans 114–335 (GEGDGIATAT…KEYGESVGFR (222 aa)).

The protein belongs to the radical SAM superfamily. Lipoyl synthase family. The cofactor is [4Fe-4S] cluster.

It localises to the plastid. Its subcellular location is the chloroplast. The enzyme catalyses [[Fe-S] cluster scaffold protein carrying a second [4Fe-4S](2+) cluster] + N(6)-octanoyl-L-lysyl-[protein] + 2 oxidized [2Fe-2S]-[ferredoxin] + 2 S-adenosyl-L-methionine + 4 H(+) = [[Fe-S] cluster scaffold protein] + N(6)-[(R)-dihydrolipoyl]-L-lysyl-[protein] + 4 Fe(3+) + 2 hydrogen sulfide + 2 5'-deoxyadenosine + 2 L-methionine + 2 reduced [2Fe-2S]-[ferredoxin]. The protein operates within protein modification; protein lipoylation via endogenous pathway; protein N(6)-(lipoyl)lysine from octanoyl-[acyl-carrier-protein]: step 2/2. Functionally, catalyzes the radical-mediated insertion of two sulfur atoms into the C-6 and C-8 positions of the octanoyl moiety bound to the lipoyl domains of lipoate-dependent enzymes, thereby converting the octanoylated domains into lipoylated derivatives. This is Lipoyl synthase, chloroplastic from Sorghum bicolor (Sorghum).